The chain runs to 65 residues: Large ribosomal subunit protein bL35 (65 aa).

The interval 1–20 (MPKMKTNSGSKKRFTLTGTG) is disordered.

Belongs to the bacterial ribosomal protein bL35 family.

This Bacteroides thetaiotaomicron (strain ATCC 29148 / DSM 2079 / JCM 5827 / CCUG 10774 / NCTC 10582 / VPI-5482 / E50) protein is Large ribosomal subunit protein bL35.